The primary structure comprises 179 residues: Ferric nitrobindin-like protein (179 aa).

The short motif at 17-23 is the GXWXGXG element; sequence GRWEGLG.

It belongs to the nitrobindin family.

The sequence is that of Ferric nitrobindin-like protein from Thermobifida fusca (strain YX).